Reading from the N-terminus, the 187-residue chain is MIDAESPTTAFRTKPAPVDPSLQHEIEQFYYWEAKLLNDRRFQEWFDLLAEDIHYFMPIRTTRIMRETAQEYSGAREYAHFDDNAQMMRGRLRKITSDVSWSENPASRTRHVISNVMIVDGEKPGEYHVSSVFIVYRNRLERQLDIFAGERKDILRRTGSEAGFELAKRTILIDQSTILSNNLSFFF.

The protein belongs to the bacterial ring-hydroxylating dioxygenase beta subunit family. In terms of assembly, heterohexamer consisting of three BphA1 subunits and three BphA2 subunits. The multicomponent biphenyl dioxygenase system is composed of a ferredoxin reductase (BphA4), a ferredoxin (BphA3), and a terminal oxygenase (BphA1A2).

The catalysed reaction is biphenyl + NADH + O2 + H(+) = (2R,3S)-3-phenylcyclohexa-3,5-diene-1,2-diol + NAD(+). It functions in the pathway xenobiotic degradation; biphenyl degradation; 2-hydroxy-2,4-pentadienoate and benzoate from biphenyl: step 1/4. Its function is as follows. Part of the oxygenase component of the biphenyl dioxygenase system that catalyzes the stereospecific dihydroxylation of the aromatic ring of biphenyl, yielding a dihydrodiol compound. Is likely involved in biphenyl degradation that allows growth of Rhodococcus sp. strain RHA1 on biphenyl as the sole source of carbon and energy. Can also use naphtalene and 4-chlorobiphenyl (4-CB) as substrates, as well as some polychlorinated biphenyls (PCB) such as 2,2'-dichlorobiphenyl, 2,3-dichlorobiphenyl and 2,5,2'-trichlorobiphenyl. Exhibits weak activity toward dibenzofuran and dibenzo-p-dioxin. Electrons are transferred from NADH to the [2Fe-2S] cluster in BphA1 via FAD of BphA4 and [2Fe-2S] cluster of BphA3. This Rhodococcus jostii (strain RHA1) protein is Biphenyl 2,3-dioxygenase subunit beta.